A 610-amino-acid polypeptide reads, in one-letter code: UvrABC system protein C (610 aa).

One can recognise a GIY-YIG domain in the interval 16-94; it reads SQPGVYRMYD…IKLYQPRYNV (79 aa). Residues 204-239 enclose the UVR domain; sequence DQVLTQLISRMETASQNLEFEEAARIRDQIQAVRRV.

It belongs to the UvrC family. In terms of assembly, interacts with UvrB in an incision complex.

Its subcellular location is the cytoplasm. In terms of biological role, the UvrABC repair system catalyzes the recognition and processing of DNA lesions. UvrC both incises the 5' and 3' sides of the lesion. The N-terminal half is responsible for the 3' incision and the C-terminal half is responsible for the 5' incision. This Escherichia coli O1:K1 / APEC protein is UvrABC system protein C.